The sequence spans 499 residues: Thioredoxin reductase 1, cytoplasmic (499 aa).

Residues 22–23 (SG), 42–43 (DF), 58–59 (TC), and 63–67 (GCIPK) contribute to the FAD site. Cys-59 and Cys-64 are disulfide-bonded. An N6-succinyllysine modification is found at Lys-68. A Phosphotyrosine modification is found at Tyr-131. FAD contacts are provided by residues 131-132 (YG) and Thr-161. Residues Arg-166, 198–204 (ASYVALE), 221–222 (RS), Arg-226, 226–228 (RGF), 292–293 (GR), and Lys-315 contribute to the NADP(+) site. Tyr-200 is a binding site for FAD. FAD-binding positions include Asp-334, 341-343 (ELT), and His-472. Residue Glu-341 participates in NADP(+) binding. His-472 serves as the catalytic Proton acceptor. The segment at residues 497–498 (CU) is a cross-link (cysteinyl-selenocysteine (Cys-Sec)). Position 498 (Sec-498) is a non-standard amino acid, selenocysteine.

This sequence belongs to the class-I pyridine nucleotide-disulfide oxidoreductase family. As to quaternary structure, homodimer. FAD is required as a cofactor. ISGylated.

It is found in the cytoplasm. The catalysed reaction is [thioredoxin]-dithiol + NADP(+) = [thioredoxin]-disulfide + NADPH + H(+). The enzyme catalyses H2O2 + NADPH + H(+) = NADP(+) + 2 H2O. Functionally, reduces disulfideprotein thioredoxin (Trx) to its dithiol-containing form. Homodimeric flavoprotein involved in the regulation of cellular redox reactions, growth and differentiation. Contains a selenocysteine residue at the C-terminal active site that is essential for catalysis. Also has reductase activity on hydrogen peroxide (H2O2). This chain is Thioredoxin reductase 1, cytoplasmic (TXNRD1), found in Bos taurus (Bovine).